The following is a 165-amino-acid chain: Protein SprT (165 aa).

The 144-residue stretch at 20–163 (EKLTQANLKL…RCVHCGEQLV (144 aa)) folds into the SprT-like domain. Position 78 (histidine 78) interacts with Zn(2+). Residue glutamate 79 is part of the active site. Histidine 82 serves as a coordination point for Zn(2+).

The protein belongs to the SprT family. Zn(2+) is required as a cofactor.

It localises to the cytoplasm. This is Protein SprT from Escherichia coli O139:H28 (strain E24377A / ETEC).